We begin with the raw amino-acid sequence, 518 residues long: Probable malate:quinone oxidoreductase (518 aa).

A disordered region spans residues 495-518 (GAIPATTDGQSTAGTEHTPTAATV). Over residues 501-518 (TDGQSTAGTEHTPTAATV) the composition is skewed to polar residues.

This sequence belongs to the MQO family. FAD serves as cofactor.

The enzyme catalyses (S)-malate + a quinone = a quinol + oxaloacetate. Its pathway is carbohydrate metabolism; tricarboxylic acid cycle; oxaloacetate from (S)-malate (quinone route): step 1/1. This is Probable malate:quinone oxidoreductase from Mycolicibacterium gilvum (strain PYR-GCK) (Mycobacterium gilvum (strain PYR-GCK)).